The following is a 206-amino-acid chain: GTP cyclohydrolase 1 (206 aa).

Zn(2+) contacts are provided by Cys95, His98, and Cys166.

Belongs to the GTP cyclohydrolase I family. Toroid-shaped homodecamer, composed of two pentamers of five dimers.

It catalyses the reaction GTP + H2O = 7,8-dihydroneopterin 3'-triphosphate + formate + H(+). It functions in the pathway cofactor biosynthesis; 7,8-dihydroneopterin triphosphate biosynthesis; 7,8-dihydroneopterin triphosphate from GTP: step 1/1. The protein is GTP cyclohydrolase 1 of Bartonella quintana (strain Toulouse) (Rochalimaea quintana).